The primary structure comprises 257 residues: Snake venom serine protease salmonase (257 aa).

Residues 1 to 18 (MVLIRVLVNFLILQLSYA) form the signal peptide. Residues 19–24 (QKSSEL) constitute a propeptide that is removed on maturation. Positions 25 to 248 (VIGGDECNIN…YIDWIQSIIA (224 aa)) constitute a Peptidase S1 domain. 5 disulfides stabilise this stretch: Cys-31–Cys-162, Cys-49–Cys-65, Cys-141–Cys-209, Cys-173–Cys-188, and Cys-199–Cys-224. Residue His-64 is the Charge relay system of the active site. N-linked (GlcNAc...) asparagine glycosylation occurs at Asn-78. Asp-109 functions as the Charge relay system in the catalytic mechanism. Catalysis depends on Ser-203, which acts as the Charge relay system.

The protein belongs to the peptidase S1 family. Snake venom subfamily. Monomer. Expressed by the venom gland.

It localises to the secreted. Its function is as follows. Snake venom serine protease that may act in the hemostasis system of the prey. The sequence is that of Snake venom serine protease salmonase from Gloydius brevicauda (Korean slamosa snake).